A 409-amino-acid chain; its full sequence is Histidine--tRNA ligase (409 aa).

The protein belongs to the class-II aminoacyl-tRNA synthetase family.

Its subcellular location is the cytoplasm. It carries out the reaction tRNA(His) + L-histidine + ATP = L-histidyl-tRNA(His) + AMP + diphosphate + H(+). This chain is Histidine--tRNA ligase (hisS), found in Archaeoglobus fulgidus (strain ATCC 49558 / DSM 4304 / JCM 9628 / NBRC 100126 / VC-16).